Here is a 156-residue protein sequence, read N- to C-terminus: Ribosomal RNA large subunit methyltransferase H (156 aa).

S-adenosyl-L-methionine contacts are provided by residues leucine 73, glycine 104, and 123 to 128 (LSSLTL).

The protein belongs to the RNA methyltransferase RlmH family. As to quaternary structure, homodimer.

Its subcellular location is the cytoplasm. It catalyses the reaction pseudouridine(1915) in 23S rRNA + S-adenosyl-L-methionine = N(3)-methylpseudouridine(1915) in 23S rRNA + S-adenosyl-L-homocysteine + H(+). Functionally, specifically methylates the pseudouridine at position 1915 (m3Psi1915) in 23S rRNA. This is Ribosomal RNA large subunit methyltransferase H from Neisseria meningitidis serogroup A / serotype 4A (strain DSM 15465 / Z2491).